The sequence spans 211 residues: Ribosomal RNA small subunit methyltransferase G (211 aa).

S-adenosyl-L-methionine is bound by residues Gly-76, Leu-81, 127–128 (VE), and Arg-142.

This sequence belongs to the methyltransferase superfamily. RNA methyltransferase RsmG family.

The protein resides in the cytoplasm. It catalyses the reaction guanosine(527) in 16S rRNA + S-adenosyl-L-methionine = N(7)-methylguanosine(527) in 16S rRNA + S-adenosyl-L-homocysteine. Functionally, specifically methylates the N7 position of guanine in position 527 of 16S rRNA. This Vibrio campbellii (strain ATCC BAA-1116) protein is Ribosomal RNA small subunit methyltransferase G.